A 103-amino-acid chain; its full sequence is Large ribosomal subunit protein uL24 (103 aa).

It belongs to the universal ribosomal protein uL24 family. As to quaternary structure, part of the 50S ribosomal subunit.

In terms of biological role, one of two assembly initiator proteins, it binds directly to the 5'-end of the 23S rRNA, where it nucleates assembly of the 50S subunit. Its function is as follows. One of the proteins that surrounds the polypeptide exit tunnel on the outside of the subunit. The protein is Large ribosomal subunit protein uL24 of Haemophilus influenzae (strain 86-028NP).